A 319-amino-acid polypeptide reads, in one-letter code: Methyltransferase tpcM (319 aa).

The methyltransferase domain stretch occupies residues 63–155 (DVGAGIGPYA…QLRPGGTFAC (93 aa)).

Belongs to the methyltransferase superfamily. As to expression, specifically expressed in conidia.

The protein operates within secondary metabolite biosynthesis. Its function is as follows. Methyltransferase; part of the gene cluster that mediates the biosynthesis of trypacidin, a mycotoxin with antiprotozoal activity and that plays a role in the infection process. The pathway begins with the synthesis of atrochrysone thioester by the polyketide synthase (PKS) tpcC. The atrochrysone carboxyl ACP thioesterase tpcB then breaks the thioester bond and releases the atrochrysone carboxylic acid from tpcC. The decarboxylase tpcK converts atrochrysone carboxylic acid to atrochrysone which is further reduced into emodin anthrone. The next step is performed by the emodin anthrone oxygenase tpcL that catalyzes the oxidation of emodinanthrone to emodin. Emodin O-methyltransferase encoded by tpcA catalyzes methylation of the 8-hydroxy group of emodin to form questin. Ring cleavage of questin by questin oxidase tpcI leads to desmethylsulochrin via several intermediates including questin epoxide. Another methylation step catalyzed by tpcM leads to the formation of sulochrin which is further converted to monomethylsulfochrin by tpcH. Finally, the tpcJ catalyzes the conversion of monomethylsulfochrin to trypacidin. Trypacidin is toxic for human pulmonary and bronchial epithelial cells by initiating the intracellular formation of nitric oxide (NO) and hydrogen peroxide (H(2)O(2)), thus triggering host necrotic cell death. The trypacidin pathway is also able to produce endocrocin via a distinct route from the endocrocin Enc pathway. This Aspergillus fumigatus (strain ATCC MYA-4609 / CBS 101355 / FGSC A1100 / Af293) (Neosartorya fumigata) protein is Methyltransferase tpcM.